A 403-amino-acid chain; its full sequence is Aspartate aminotransferase, cytoplasmic isozyme 2 (403 aa).

M1 is modified (N-acetylmethionine). L-aspartate is bound by residues G37, W132, and N185. N6-(pyridoxal phosphate)lysine is present on K249. R377 serves as a coordination point for L-aspartate.

The protein belongs to the class-I pyridoxal-phosphate-dependent aminotransferase family. In terms of assembly, homodimer. Pyridoxal 5'-phosphate serves as cofactor.

It localises to the cytoplasm. It carries out the reaction L-aspartate + 2-oxoglutarate = oxaloacetate + L-glutamate. Functionally, important for the metabolism of amino acids and Krebs-cycle related organic acids. In plants, it is involved in nitrogen metabolism and in aspects of carbon and energy metabolism. The chain is Aspartate aminotransferase, cytoplasmic isozyme 2 (ASP4) from Arabidopsis thaliana (Mouse-ear cress).